Reading from the N-terminus, the 64-residue chain is Conotoxin Cal12.4 (64 aa).

Residues 1–21 (MKLTCMLVVLLLVLPFGDLIA) form the signal peptide.

The protein belongs to the conotoxin O1 superfamily. Contains 4 disulfide bonds. As to expression, expressed by the venom duct.

The protein resides in the secreted. Its function is as follows. Probable neurotoxin. The sequence is that of Conotoxin Cal12.4 from Californiconus californicus (California cone).